A 179-amino-acid polypeptide reads, in one-letter code: MDTKSLLVTGYRHTDLGIFSEKDPRLHIIKSAIRRNFIRFLEEGVSWFILTGQLGFEYWSLEVLEDLRAEGYQLSIATIFPFENHGEQWNEANQAKLARFKQVDFVKYAYPRYENPGQFRDYNQFLLDNTTGCYLFYDSENETNLKYLYHMVLKKEGYNRKTLTFEELNEEAENFSNSE.

This sequence belongs to the UPF0398 family.

The protein is UPF0398 protein SSU05_0416 of Streptococcus suis (strain 05ZYH33).